A 228-amino-acid chain; its full sequence is U1 small nuclear ribonucleoprotein C-2 (228 aa).

Residues 4 to 36 form a Matrin-type zinc finger; sequence YYCDYCDTYLTHDSPSVRKQHNAGYKHKANVRT. The disordered stretch occupies residues 105 to 228; that stretch reads PGVRPPILPA…SYALPSEGNH (124 aa). Pro residues-rich tracts occupy residues 107–156 and 164–175; these read VRPP…PPGS and LPRPPTLPPPTS. Over residues 178-190 the composition is skewed to low complexity; it reads PGAPIPNSAAPPA. Positions 196-214 are enriched in pro residues; the sequence is PPAPAGPTSGAPPAPPTAP.

The protein belongs to the U1 small nuclear ribonucleoprotein C family. As to quaternary structure, U1 snRNP is composed of the 7 core Sm proteins B/B', D1, D2, D3, E, F and G that assemble in a heptameric protein ring on the Sm site of the small nuclear RNA to form the core snRNP, and at least 3 U1 snRNP-specific proteins U1-70K, U1-A and U1-C. U1-C interacts with U1 snRNA and the 5' splice-site region of the pre-mRNA.

Its subcellular location is the nucleus. Component of the spliceosomal U1 snRNP, which is essential for recognition of the pre-mRNA 5' splice-site and the subsequent assembly of the spliceosome. U1-C is directly involved in initial 5' splice-site recognition for both constitutive and regulated alternative splicing. The interaction with the 5' splice-site seems to precede base-pairing between the pre-mRNA and the U1 snRNA. Stimulates commitment or early (E) complex formation by stabilizing the base pairing of the 5' end of the U1 snRNA and the 5' splice-site region. In Sorghum bicolor (Sorghum), this protein is U1 small nuclear ribonucleoprotein C-2.